We begin with the raw amino-acid sequence, 497 residues long: Aspartyl/glutamyl-tRNA(Asn/Gln) amidotransferase subunit B (497 aa).

This sequence belongs to the GatB/GatE family. GatB subfamily. As to quaternary structure, heterotrimer of A, B and C subunits.

The enzyme catalyses L-glutamyl-tRNA(Gln) + L-glutamine + ATP + H2O = L-glutaminyl-tRNA(Gln) + L-glutamate + ADP + phosphate + H(+). The catalysed reaction is L-aspartyl-tRNA(Asn) + L-glutamine + ATP + H2O = L-asparaginyl-tRNA(Asn) + L-glutamate + ADP + phosphate + 2 H(+). Its function is as follows. Allows the formation of correctly charged Asn-tRNA(Asn) or Gln-tRNA(Gln) through the transamidation of misacylated Asp-tRNA(Asn) or Glu-tRNA(Gln) in organisms which lack either or both of asparaginyl-tRNA or glutaminyl-tRNA synthetases. The reaction takes place in the presence of glutamine and ATP through an activated phospho-Asp-tRNA(Asn) or phospho-Glu-tRNA(Gln). This Cutibacterium acnes (strain DSM 16379 / KPA171202) (Propionibacterium acnes) protein is Aspartyl/glutamyl-tRNA(Asn/Gln) amidotransferase subunit B.